The chain runs to 554 residues: Dihydroxy-acid dehydratase (554 aa).

D78 contacts Mg(2+). Position 119 (C119) interacts with [2Fe-2S] cluster. Mg(2+)-binding residues include D120 and K121. The residue at position 121 (K121) is an N6-carboxylysine. Residue C191 participates in [2Fe-2S] cluster binding. Residue E442 coordinates Mg(2+). S468 acts as the Proton acceptor in catalysis.

It belongs to the IlvD/Edd family. In terms of assembly, homodimer. [2Fe-2S] cluster serves as cofactor. Mg(2+) is required as a cofactor.

It carries out the reaction (2R)-2,3-dihydroxy-3-methylbutanoate = 3-methyl-2-oxobutanoate + H2O. The catalysed reaction is (2R,3R)-2,3-dihydroxy-3-methylpentanoate = (S)-3-methyl-2-oxopentanoate + H2O. Its pathway is amino-acid biosynthesis; L-isoleucine biosynthesis; L-isoleucine from 2-oxobutanoate: step 3/4. The protein operates within amino-acid biosynthesis; L-valine biosynthesis; L-valine from pyruvate: step 3/4. Functionally, functions in the biosynthesis of branched-chain amino acids. Catalyzes the dehydration of (2R,3R)-2,3-dihydroxy-3-methylpentanoate (2,3-dihydroxy-3-methylvalerate) into 2-oxo-3-methylpentanoate (2-oxo-3-methylvalerate) and of (2R)-2,3-dihydroxy-3-methylbutanoate (2,3-dihydroxyisovalerate) into 2-oxo-3-methylbutanoate (2-oxoisovalerate), the penultimate precursor to L-isoleucine and L-valine, respectively. The chain is Dihydroxy-acid dehydratase from Thermotoga petrophila (strain ATCC BAA-488 / DSM 13995 / JCM 10881 / RKU-1).